The chain runs to 389 residues: Mannitol-1-phosphate 5-dehydrogenase (389 aa).

Residue 5–16 (AIQFGGGNIGRG) participates in NAD(+) binding. Lys214 is an active-site residue.

It belongs to the mannitol dehydrogenase family. In terms of assembly, monomer.

It catalyses the reaction D-mannitol 1-phosphate + NAD(+) = beta-D-fructose 6-phosphate + NADH + H(+). In terms of biological role, catalyzes the NAD(H)-dependent interconversion of D-fructose 6-phosphate and D-mannitol 1-phosphate in the mannitol metabolic pathway. The polypeptide is Mannitol-1-phosphate 5-dehydrogenase (Talaromyces marneffei (strain ATCC 18224 / CBS 334.59 / QM 7333) (Penicillium marneffei)).